Here is a 496-residue protein sequence, read N- to C-terminus: Lysine--tRNA ligase (496 aa).

Residues E409 and E416 each coordinate Mg(2+).

The protein belongs to the class-II aminoacyl-tRNA synthetase family. In terms of assembly, homodimer. Mg(2+) serves as cofactor.

Its subcellular location is the cytoplasm. It catalyses the reaction tRNA(Lys) + L-lysine + ATP = L-lysyl-tRNA(Lys) + AMP + diphosphate. The protein is Lysine--tRNA ligase of Streptococcus thermophilus (strain ATCC BAA-491 / LMD-9).